The following is a 156-amino-acid chain: Small ribosomal subunit protein uS7 (156 aa).

Belongs to the universal ribosomal protein uS7 family. As to quaternary structure, part of the 30S ribosomal subunit. Contacts proteins S9 and S11.

Functionally, one of the primary rRNA binding proteins, it binds directly to 16S rRNA where it nucleates assembly of the head domain of the 30S subunit. Is located at the subunit interface close to the decoding center, probably blocks exit of the E-site tRNA. This Mannheimia succiniciproducens (strain KCTC 0769BP / MBEL55E) protein is Small ribosomal subunit protein uS7.